The sequence spans 308 residues: MQEKISKFEDFLTQLQQNITTVLEQHETNAAKFISDKWQKPDTPDQKLKGYGNSMIIEGGEIFEKGVVAFSRVHGSELPPSATAKRQELAGKSFIATGLSLVIHPRNPFVPTSHANFRIFIADADTDNPIWWFGGGFDLTPYYPFEEDAIHWHQTAKNICDKHDKTYYPKFKKWCDEYFYLKHRDECRGVGGLFFDDLNDKSFDECFNFVTDCANSYLDAYIPIVAQRKNIEYSQKHKDFQLYRRGRYVEFNLVFDRGTIFGLQSGGRTESILSSMPPMATWKYNWQPELGSEEEKVYQYIKPRDWIK.

Serine 100 contributes to the substrate binding site. Positions 104 and 114 each coordinate a divalent metal cation. The active-site Proton donor is histidine 114. 116 to 118 (NFR) contacts substrate. A divalent metal cation-binding residues include histidine 153 and histidine 183. Residues 248–283 (YVEFNLVFDRGTIFGLQSGGRTESILSSMPPMATWK) form an important for dimerization region. Residue 266–268 (GGR) coordinates substrate.

The protein belongs to the aerobic coproporphyrinogen-III oxidase family. In terms of assembly, homodimer. Requires a divalent metal cation as cofactor.

It is found in the cytoplasm. It catalyses the reaction coproporphyrinogen III + O2 + 2 H(+) = protoporphyrinogen IX + 2 CO2 + 2 H2O. The protein operates within porphyrin-containing compound metabolism; protoporphyrin-IX biosynthesis; protoporphyrinogen-IX from coproporphyrinogen-III (O2 route): step 1/1. Its function is as follows. Involved in the heme biosynthesis. Catalyzes the aerobic oxidative decarboxylation of propionate groups of rings A and B of coproporphyrinogen-III to yield the vinyl groups in protoporphyrinogen-IX. The chain is Oxygen-dependent coproporphyrinogen-III oxidase from Francisella tularensis subsp. mediasiatica (strain FSC147).